The sequence spans 164 residues: UPF0225 protein Shewmr4_2054 (164 aa).

It belongs to the UPF0225 family.

This Shewanella sp. (strain MR-4) protein is UPF0225 protein Shewmr4_2054.